A 185-amino-acid chain; its full sequence is ATP-dependent protease subunit HslV (185 aa).

The active site involves Thr-13. Na(+)-binding residues include Gly-167, Cys-170, and Thr-173.

This sequence belongs to the peptidase T1B family. HslV subfamily. As to quaternary structure, a double ring-shaped homohexamer of HslV is capped on each side by a ring-shaped HslU homohexamer. The assembly of the HslU/HslV complex is dependent on binding of ATP.

It localises to the cytoplasm. It carries out the reaction ATP-dependent cleavage of peptide bonds with broad specificity.. Its activity is regulated as follows. Allosterically activated by HslU binding. Functionally, protease subunit of a proteasome-like degradation complex believed to be a general protein degrading machinery. The chain is ATP-dependent protease subunit HslV from Sinorhizobium fredii (strain NBRC 101917 / NGR234).